The following is a 190-amino-acid chain: Glucose-6-phosphate isomerase (190 aa).

Fe cation contacts are provided by histidine 89, histidine 91, glutamate 98, and histidine 137.

Belongs to the archaeal-type GPI family. As to quaternary structure, homodimer. Requires Fe cation as cofactor.

Its subcellular location is the cytoplasm. The catalysed reaction is alpha-D-glucose 6-phosphate = beta-D-fructose 6-phosphate. Its pathway is carbohydrate degradation; glycolysis; D-glyceraldehyde 3-phosphate and glycerone phosphate from D-glucose: step 2/4. Its activity is regulated as follows. Inhibited by mannose 6-phosphate, fructose 1-phosphate and fructose 1,6-bisphosphate. Its activity is also inhibited by Cobalt (II) ions &lt; EDTA &lt; nickel (II) ions &lt; zinc (II) ions &lt;&lt; cadmium (II) ions &lt; copper (II) ions. Sodium and potassium ions and manganese ions show little or no effect on activity. In Thermococcus litoralis, this protein is Glucose-6-phosphate isomerase (pgiA).